A 255-amino-acid chain; its full sequence is Small ribosomal subunit protein eS1 (255 aa).

The span at 1–18 (MAVGKNKRLSKGKKGLKK) shows a compositional bias: basic residues. Residues 1 to 28 (MAVGKNKRLSKGKKGLKKRTQDPFSRKD) are disordered. At A2 the chain carries N-acetylalanine; partial. The span at 19–28 (RTQDPFSRKD) shows a compositional bias: basic and acidic residues.

Belongs to the eukaryotic ribosomal protein eS1 family. As to quaternary structure, component of the small ribosomal subunit. Mature ribosomes consist of a small (40S) and a large (60S) subunit. The 40S subunit contains about 33 different proteins and 1 molecule of RNA (18S). The 60S subunit contains about 49 different proteins and 3 molecules of RNA (25S, 5.8S and 5S).

Its subcellular location is the cytoplasm. The chain is Small ribosomal subunit protein eS1 from Paracoccidioides lutzii (strain ATCC MYA-826 / Pb01) (Paracoccidioides brasiliensis).